We begin with the raw amino-acid sequence, 461 residues long: Ribulose bisphosphate carboxylase (461 aa).

Asn-113 is a substrate binding site. The active-site Proton acceptor is Lys-168. Lys-170 lines the substrate pocket. 3 residues coordinate Mg(2+): Lys-193, Asp-195, and Glu-196. Position 193 is an N6-carboxylysine (Lys-193). Catalysis depends on His-289, which acts as the Proton acceptor. Arg-290, His-323, and Ser-370 together coordinate substrate.

Belongs to the RuBisCO large chain family. Type II subfamily. As to quaternary structure, homodimer. Mg(2+) is required as a cofactor.

It carries out the reaction 2 (2R)-3-phosphoglycerate + 2 H(+) = D-ribulose 1,5-bisphosphate + CO2 + H2O. It catalyses the reaction D-ribulose 1,5-bisphosphate + O2 = 2-phosphoglycolate + (2R)-3-phosphoglycerate + 2 H(+). Its function is as follows. RuBisCO catalyzes two reactions: the carboxylation of D-ribulose 1,5-bisphosphate, the primary event in carbon dioxide fixation, as well as the oxidative fragmentation of the pentose substrate. Both reactions occur simultaneously and in competition at the same active site. In Thiomonas intermedia (strain K12) (Thiobacillus intermedius), this protein is Ribulose bisphosphate carboxylase.